Here is a 422-residue protein sequence, read N- to C-terminus: 5'-deoxyadenosine deaminase (422 aa).

Zn(2+) is bound by residues H57 and H59. Substrate is bound by residues E86 and H178. H205 provides a ligand contact to Zn(2+). The substrate site is built by E208 and D294. A Zn(2+)-binding site is contributed by D294.

The protein belongs to the metallo-dependent hydrolases superfamily. MTA/SAH deaminase family. In terms of assembly, homotetramer. Zn(2+) is required as a cofactor.

The enzyme catalyses 5'-deoxyadenosine + H2O + H(+) = 5'-deoxyinosine + NH4(+). The catalysed reaction is S-adenosyl-L-homocysteine + H2O + H(+) = S-inosyl-L-homocysteine + NH4(+). It carries out the reaction S-methyl-5'-thioadenosine + H2O + H(+) = S-methyl-5'-thioinosine + NH4(+). It catalyses the reaction adenosine + H2O + H(+) = inosine + NH4(+). It participates in amino-acid biosynthesis; S-adenosyl-L-methionine biosynthesis. Catalyzes the deamination of three SAM-derived enzymatic products, namely 5'-deoxyadenosine, S-adenosyl-L-homocysteine, and 5'-methylthioadenosine, to produce the inosine analogs. Can also deaminate adenosine. The preferred substrate for this enzyme is 5'-deoxyadenosine, but all these substrates are efficiently deaminated. Likely functions in a S-adenosyl-L-methionine (SAM) recycling pathway from S-adenosyl-L-homocysteine (SAH) produced from SAM-dependent methylation reactions. May also be involved in the recycling of 5'-deoxyadenosine, whereupon the 5'-deoxyribose moiety of 5'-deoxyinosine is further metabolized to deoxyhexoses used for the biosynthesis of aromatic amino acids in methanogens. The sequence is that of 5'-deoxyadenosine deaminase from Methanococcus maripaludis (strain C5 / ATCC BAA-1333).